The sequence spans 158 residues: Large ribosomal subunit protein uL16 (158 aa).

Belongs to the universal ribosomal protein uL16 family. Part of the 50S ribosomal subunit.

Its function is as follows. Binds 23S rRNA and is also seen to make contacts with the A and possibly P site tRNAs. This Synechococcus sp. (strain CC9605) protein is Large ribosomal subunit protein uL16.